The following is a 140-amino-acid chain: Large ribosomal subunit protein uL14 (140 aa).

This sequence belongs to the universal ribosomal protein uL14 family. In terms of assembly, part of the 50S ribosomal subunit. Forms a cluster with proteins L3 and L24e, part of which may contact the 16S rRNA in 2 intersubunit bridges.

In terms of biological role, binds to 23S rRNA. Forms part of two intersubunit bridges in the 70S ribosome. The polypeptide is Large ribosomal subunit protein uL14 (Staphylothermus marinus (strain ATCC 43588 / DSM 3639 / JCM 9404 / F1)).